Reading from the N-terminus, the 148-residue chain is MSIWVDADACPGVIKELLFRAAERTRTPLILVANQPVRVPRSRYVRRVQVAPGFDVADNEIVRCVEPGDLVITADIPLAAEVIAKGAHALNPRGERYTTSNIKARLNMRDFMDTLRASGVDTGGAPAMSQRDRQAFANELDRFLTANR.

Belongs to the UPF0178 family.

This Alkalilimnicola ehrlichii (strain ATCC BAA-1101 / DSM 17681 / MLHE-1) protein is UPF0178 protein Mlg_1612.